A 101-amino-acid polypeptide reads, in one-letter code: Small ribosomal subunit protein uS10 (101 aa).

It belongs to the universal ribosomal protein uS10 family. As to quaternary structure, part of the 30S ribosomal subunit.

Functionally, involved in the binding of tRNA to the ribosomes. This chain is Small ribosomal subunit protein uS10, found in Mycobacterium avium (strain 104).